The sequence spans 195 residues: Glycine-rich protein A3 (195 aa).

Disordered stretches follow at residues 23-103 (AGGG…GVAG) and 159-182 (VMES…GSNL). A compositionally biased stretch (gly residues) spans 47-77 (PAGGGYPPQGYPPAGGGYPPQGYPPAGGGYP). Over residues 82–94 (PPAGHHSGSSAPH) the composition is skewed to low complexity. A compositionally biased stretch (basic and acidic residues) spans 163–175 (LSRESTGRARSTD).

This chain is Glycine-rich protein A3, found in Daucus carota (Wild carrot).